Consider the following 459-residue polypeptide: ATP synthase subunit beta (459 aa).

ATP is bound at residue 149–156 (GGAGVGKT).

The protein belongs to the ATPase alpha/beta chains family. As to quaternary structure, F-type ATPases have 2 components, CF(1) - the catalytic core - and CF(0) - the membrane proton channel. CF(1) has five subunits: alpha(3), beta(3), gamma(1), delta(1), epsilon(1). CF(0) has three main subunits: a(1), b(2) and c(9-12). The alpha and beta chains form an alternating ring which encloses part of the gamma chain. CF(1) is attached to CF(0) by a central stalk formed by the gamma and epsilon chains, while a peripheral stalk is formed by the delta and b chains.

The protein resides in the cell inner membrane. It catalyses the reaction ATP + H2O + 4 H(+)(in) = ADP + phosphate + 5 H(+)(out). Its function is as follows. Produces ATP from ADP in the presence of a proton gradient across the membrane. The catalytic sites are hosted primarily by the beta subunits. The polypeptide is ATP synthase subunit beta (Pseudomonas syringae pv. syringae (strain B728a)).